Here is a 2276-residue protein sequence, read N- to C-terminus: Protein Ycf2 (2276 aa).

1621 to 1628 (GSIGTGRS) contacts ATP.

It belongs to the Ycf2 family.

It is found in the plastid. The protein resides in the chloroplast stroma. Its function is as follows. Probable ATPase of unknown function. Its presence in a non-photosynthetic plant (Epifagus virginiana) and experiments in tobacco indicate that it has an essential function which is probably not related to photosynthesis. This Guizotia abyssinica (Niger) protein is Protein Ycf2.